Consider the following 238-residue polypeptide: Metal-independent phosphoserine phosphatase (238 aa).

The active-site Tele-phosphohistidine intermediate is H32. Residue E107 is the Proton donor/acceptor of the active site.

This sequence belongs to the phosphoglycerate mutase family.

The enzyme catalyses O-phospho-L-serine + H2O = L-serine + phosphate. It carries out the reaction O-phospho-D-serine + H2O = D-serine + phosphate. Its function is as follows. Phosphoglycerate mutase-like protein lacking PGM activity, but having a low metal-independent phosphoserine phosphatase activity in vitro. May be involved in serine biosynthesis. In Arabidopsis thaliana (Mouse-ear cress), this protein is Metal-independent phosphoserine phosphatase (IPSP).